A 370-amino-acid chain; its full sequence is Cytochrome b (370 aa).

4 helical membrane passes run 25 to 45 (FGSM…FLAV), 69 to 90 (WLMQ…YIHI), 105 to 125 (WLSG…GYVL), and 170 to 190 (FFAL…LHVM). Heme b-binding residues include H75 and H89. 2 residues coordinate heme b: H174 and H188. H193 provides a ligand contact to a ubiquinone. Helical transmembrane passes span 218–238 (YKDL…VSFS), 280–300 (LGGA…PFTH), 312–332 (FMQM…WTAT), and 339–358 (FTLI…ISNP).

Belongs to the cytochrome b family. The cytochrome bc1 complex contains 3 respiratory subunits (MT-CYB, CYC1 and UQCRFS1), 2 core proteins (UQCRC1 and UQCRC2) and probably 6 low-molecular weight proteins. Requires heme b as cofactor.

The protein localises to the mitochondrion inner membrane. Component of the ubiquinol-cytochrome c reductase complex (complex III or cytochrome b-c1 complex) that is part of the mitochondrial respiratory chain. The b-c1 complex mediates electron transfer from ubiquinol to cytochrome c. Contributes to the generation of a proton gradient across the mitochondrial membrane that is then used for ATP synthesis. The chain is Cytochrome b (MT-CYB) from Eunectes notaeus (Yellow anaconda).